A 208-amino-acid polypeptide reads, in one-letter code: Hemocyanin, units E and F (208 aa).

Residue His-1 coordinates Cu cation. Residues 1–74 are unit E; the sequence is HGLPAQCPNA…HDLESVRGNL (74 aa). Cys-7 and Cys-18 are oxidised to a cystine. The segment at residues 19 to 21 is a cross-link (2'-(S-cysteinyl)-histidine (Cys-His)); that stretch reads CLH. Asn-43 carries an N-linked (GlcNAc...) asparagine glycan. The interval 75–208 is unit F; sequence VRKNVDRLSL…GHLSLLSPET (134 aa). His-113 is a binding site for Cu cation. Cys-119 and Cys-130 are joined by a disulfide. The 2'-(S-cysteinyl)-histidine (Cys-His) cross-link spans 131–133; sequence CLH. Cu cation contacts are provided by His-133 and His-142.

This sequence belongs to the tyrosinase family. Hemocyanin subfamily. Decamers of large identical subunits (390 kDa), each containing 8 globular oxygen-binding functional units. Cu(2+) serves as cofactor.

Hemocyanins are copper-containing oxygen carriers occurring freely dissolved in the hemolymph of many mollusks and arthropods. The sequence is that of Hemocyanin, units E and F from Sepia officinalis (Common cuttlefish).